Here is a 979-residue protein sequence, read N- to C-terminus: Glycine dehydrogenase (decarboxylating) (979 aa).

Lysine 726 is subject to N6-(pyridoxal phosphate)lysine.

The protein belongs to the GcvP family. As to quaternary structure, the glycine cleavage system is composed of four proteins: P, T, L and H. The cofactor is pyridoxal 5'-phosphate.

It carries out the reaction N(6)-[(R)-lipoyl]-L-lysyl-[glycine-cleavage complex H protein] + glycine + H(+) = N(6)-[(R)-S(8)-aminomethyldihydrolipoyl]-L-lysyl-[glycine-cleavage complex H protein] + CO2. Its function is as follows. The glycine cleavage system catalyzes the degradation of glycine. The P protein binds the alpha-amino group of glycine through its pyridoxal phosphate cofactor; CO(2) is released and the remaining methylamine moiety is then transferred to the lipoamide cofactor of the H protein. The chain is Glycine dehydrogenase (decarboxylating) from Ralstonia pickettii (strain 12J).